An 85-amino-acid chain; its full sequence is U4-theraphotoxin-Hhn1w (85 aa).

The signal sequence occupies residues 1–22; sequence MKVTLIAILTCAAVLALHTTAA. The propeptide occupies 23–48; it reads EELEAESQLMEVGMPDTELAAVDEER. Intrachain disulfides connect Cys52-Cys66, Cys56-Cys77, and Cys71-Cys82.

The protein belongs to the neurotoxin 12 (Hwtx-2) family. 02 (Hwtx-2) subfamily. In terms of tissue distribution, expressed by the venom gland.

It localises to the secreted. Postsynaptic neurotoxin. In Cyriopagopus hainanus (Chinese bird spider), this protein is U4-theraphotoxin-Hhn1w.